A 500-amino-acid polypeptide reads, in one-letter code: Versicolorin B desaturase (500 aa).

A helical membrane pass occupies residues 3–23 (FLSLPSLVIVIPVGYLLFHLG). Residues N243 and N400 are each glycosylated (N-linked (GlcNAc...) asparagine). Heme is bound at residue C438.

The protein belongs to the cytochrome P450 family. The cofactor is heme.

The protein localises to the membrane. The enzyme catalyses versicolorin B + NADPH + O2 + H(+) = versicolorin A + NADP(+) + 2 H2O. Its pathway is mycotoxin biosynthesis; aflatoxin biosynthesis. Its function is as follows. Versicolorin B desaturase; part of the gene cluster that mediates the biosynthesis of aflatoxins, a group of polyketide-derived furanocoumarins, and part of the most toxic and carcinogenic compounds among the known mycotoxins. The four major aflatoxins produced by A.parasiticus are aflatoxin B1 (AFB1), aflatoxin B2 (AFB2), aflatoxin G1 (AFG1) and aflatoxin G2 (AFG2). Within the aflatoxin pathway, the versicolorin B desaturase aflL catalyzes the conversion of versicolorin B (VERB) to versicolorin A (VERA). The biosynthesis of aflatoxins begins with the norsolorinic acid synthase aflC that combines a hexanoyl starter unit produced by the fatty acid synthase aflA/aflB and 7 malonyl-CoA extender units to synthesize the precursor NOR. The second step is the conversion of NOR to averantin and requires the norsolorinic acid ketoreductase aflD, which catalyzes the dehydration of norsolorinic acid to form (1'S)-averantin. The norsolorinic acid reductases aflE and aflF may also play a role in the conversion of NOR to AVN. The cytochrome P450 monooxygenase aflG then catalyzes the hydroxylation of AVN to 5'hydroxyaverantin (HAVN). The next step is performed by the 5'-hydroxyaverantin dehydrogenase aflH that transforms HAVN to 5'-oxoaverantin (OAVN) which is further converted to averufin (AVF) by aflK that plays a dual role in the pathway, as a 5'-oxoaverantin cyclase that mediates conversion of 5'-oxoaverantin, as well as a versicolorin B synthase in a later step in the pathway. The averufin oxidase aflI catalyzes the conversion of AVF to versiconal hemiacetal acetate (VHA). VHA is then the substrate for the versiconal hemiacetal acetate esterase aflJ to yield versiconal (VAL). Versicolorin B synthase aflK then converts VAL to versicolorin B (VERB) by closing the bisfuran ring of aflatoxin which is required for DNA-binding, thus giving to aflatoxin its activity as a mutagen. Then, the activity of the versicolorin B desaturase aflL leads to versicolorin A (VERA). A branch point starts from VERB since it can also be converted to dihydrodemethylsterigmatocystin (DMDHST), probably also by aflL, VERA being a precursor for aflatoxins B1 and G1, and DMDHST for aflatoxins B2 and G2. Next, the versicolorin reductase aflM and the cytochrome P450 monooxygenase aflN are involved in conversion of VERA to demethylsterigmatocystin (DMST). AflX and aflY seem also involved in this step, through probable aflX-mediated epoxide ring-opening step following versicolorin A oxidation and aflY-mediated Baeyer-Villiger oxidation required for the formation of the xanthone ring. The methyltransferase aflO then leads to the modification of DMST to sterigmatocystin (ST), and of DMDHST to dihydrosterigmatocystin (DHST). Both ST and DHST are then substrates of the O-methyltransferase aflP to yield O-methylsterigmatocystin (OMST) and dihydro-O-methylsterigmatocystin (DHOMST), respectively. Finally OMST is converted to aflatoxins B1 and G1, and DHOMST to aflatoxins B2 and G2, via the action of several enzymes including O-methylsterigmatocystin oxidoreductase aflQ, the cytochrome P450 monooxygenase aflU, but also the NADH-dependent flavin oxidoreductase nadA which is specifically required for the synthesis of AFG1. The polypeptide is Versicolorin B desaturase (Aspergillus parasiticus (strain ATCC 56775 / NRRL 5862 / SRRC 143 / SU-1)).